Reading from the N-terminus, the 412-residue chain is MKMHLQRALVVLALLNLATVSLSLSTCTTLDFGHIKKKRVEAIRGQILSKLRLTSPPEPSVMTHVPYQVLALYNSTRELLEEMHGEREEGCTQETSESEYYAKEIHKFDMIQGLAEHNELAVCPKGITSKVFRFNVSSVEKNGTNLFRAEFRVLRVPNPSSKRTEQRIELFQILRPDEHIAKQRYIGGKNLPTRGTAEWLSFDVTDTVREWLLRRESNLGLEISIHCPCHTFQPNGDILENVHEVMEIKFKGVDNEDDHGRGDLGRLKKQKDHHNPHLILMMIPPHRLDSPGQGGQRKKRALDTNYCFRNLEENCCVRPLYIDFRQDLGWKWVHEPKGYYANFCSGPCPYLRSSDTTHSTVLGLYNTLNPEASASPCCVPQDLEPLTILYYVGRTPKVEQLSNMVVKSCKCS.

The first 23 residues, 1 to 23, serve as a signal peptide directing secretion; it reads MKMHLQRALVVLALLNLATVSLS. Asn74, Asn135, and Asn142 each carry an N-linked (GlcNAc...) asparagine glycan. Residues 261–263 carry the Cell attachment site motif; that stretch reads RGD. An N5-methylglutamine modification is found at Gln293. 4 disulfide bridges follow: Cys307-Cys316, Cys315-Cys378, Cys344-Cys409, and Cys348-Cys411.

Belongs to the TGF-beta family. Interacts with ASPN. Latency-associated peptide: Homodimer; disulfide-linked. Latency-associated peptide: Interacts with Transforming growth factor beta-3 (TGF-beta-3) chain; interaction is non-covalent and maintains (TGF-beta-3) in a latent state. Latency-associated peptide: Interacts with LRRC32/GARP; leading to regulate activation of TGF-beta-3 and promote epithelial fusion during palate development. Latency-associated peptide: Interacts (via cell attachment site) with integrins, leading to release of the active TGF-beta-3. Transforming growth factor beta-3: Homodimer; disulfide-linked. Transforming growth factor beta-3: Interacts with TGF-beta receptors (TGFBR1 and TGFBR2), leading to signal transduction. Transforming growth factor beta-3 proprotein: The precursor proprotein is cleaved in the Golgi apparatus to form Transforming growth factor beta-3 (TGF-beta-3) and Latency-associated peptide (LAP) chains, which remain non-covalently linked, rendering TGF-beta-3 inactive. In terms of processing, methylated at Gln-293 by N6AMT1. Expressed in cardiomyocytes.

The protein localises to the secreted. It is found in the extracellular space. It localises to the extracellular matrix. Its function is as follows. Transforming growth factor beta-3 proprotein: Precursor of the Latency-associated peptide (LAP) and Transforming growth factor beta-3 (TGF-beta-3) chains, which constitute the regulatory and active subunit of TGF-beta-3, respectively. Functionally, required to maintain the Transforming growth factor beta-3 (TGF-beta-3) chain in a latent state during storage in extracellular matrix. Associates non-covalently with TGF-beta-3 and regulates its activation via interaction with 'milieu molecules', such as LTBP1 and LRRC32/GARP, that control activation of TGF-beta-3. Interaction with integrins results in distortion of the Latency-associated peptide chain and subsequent release of the active TGF-beta-3. In terms of biological role, transforming growth factor beta-3: Multifunctional protein that regulates embryogenesis and cell differentiation and is required in various processes such as secondary palate development. Activation into mature form follows different steps: following cleavage of the proprotein in the Golgi apparatus, Latency-associated peptide (LAP) and Transforming growth factor beta-3 (TGF-beta-3) chains remain non-covalently linked rendering TGF-beta-3 inactive during storage in extracellular matrix. At the same time, LAP chain interacts with 'milieu molecules', such as LTBP1 and LRRC32/GARP that control activation of TGF-beta-3 and maintain it in a latent state during storage in extracellular milieus. TGF-beta-3 is released from LAP by integrins: integrin-binding results in distortion of the LAP chain and subsequent release of the active TGF-beta-3. Once activated following release of LAP, TGF-beta-3 acts by binding to TGF-beta receptors (TGFBR1 and TGFBR2), which transduce signal. The protein is Transforming growth factor beta-3 proprotein (Tgfb3) of Rattus norvegicus (Rat).